A 499-amino-acid polypeptide reads, in one-letter code: MPFSADSVTSLRQIADALAARSVSAEELAREYLARIEAGRALNAFVAVDPELTLAQARAADERRAQGQATPLTGVPIAHKDVFVTRGWKSTAGSKMLANYESPFDATVVERLAAAGMVTLGKTNMDEFAMGSSNENSFFGPVSNPWDTSRVPGGSSGGSAAAVAAGLAPAATGTDTGGSIRQPASFSGITGIKPTYGRVSRYGMIAFASSLDQGGPMAHSAEDCALLLNGMAGFDPKDSTSLTPELGGVTEDFTRLLGQPRAGATASQPLAGLRIGLPREYFGKGLSADVEQALRAALAEYEKLGATLVDVTLPKTELSIPVYYIIAPAEASSNLSRFDGVRYGHRAAQYGDLLDMYKKSRAEGFGPEVKRRIMVGTYVLSHGYYDAYYLQAQKIRRIIADDFQRAFTQCDVIMGPVAPTVAWKLGEKTADPVQMYLADIFTLSTSLAGLPGMSVPCGFGEGNMPVGLQLIGNYFDEAQLLQTAHAFQQATDWHLRRPA.

Catalysis depends on charge relay system residues lysine 80 and serine 155. The Acyl-ester intermediate role is filled by serine 179.

It belongs to the amidase family. GatA subfamily. In terms of assembly, heterotrimer of A, B and C subunits.

It carries out the reaction L-glutamyl-tRNA(Gln) + L-glutamine + ATP + H2O = L-glutaminyl-tRNA(Gln) + L-glutamate + ADP + phosphate + H(+). Its function is as follows. Allows the formation of correctly charged Gln-tRNA(Gln) through the transamidation of misacylated Glu-tRNA(Gln) in organisms which lack glutaminyl-tRNA synthetase. The reaction takes place in the presence of glutamine and ATP through an activated gamma-phospho-Glu-tRNA(Gln). The protein is Glutamyl-tRNA(Gln) amidotransferase subunit A of Cupriavidus metallidurans (strain ATCC 43123 / DSM 2839 / NBRC 102507 / CH34) (Ralstonia metallidurans).